A 116-amino-acid polypeptide reads, in one-letter code: Aspartate 1-decarboxylase (116 aa).

The Schiff-base intermediate with substrate; via pyruvic acid role is filled by S25. At S25 the chain carries Pyruvic acid (Ser). T57 serves as a coordination point for substrate. The active-site Proton donor is Y58. Position 73–75 (G73–A75) interacts with substrate.

The protein belongs to the PanD family. As to quaternary structure, heterooctamer of four alpha and four beta subunits. Requires pyruvate as cofactor. Is synthesized initially as an inactive proenzyme, which is activated by self-cleavage at a specific serine bond to produce a beta-subunit with a hydroxyl group at its C-terminus and an alpha-subunit with a pyruvoyl group at its N-terminus.

The protein localises to the cytoplasm. It carries out the reaction L-aspartate + H(+) = beta-alanine + CO2. It functions in the pathway cofactor biosynthesis; (R)-pantothenate biosynthesis; beta-alanine from L-aspartate: step 1/1. Its function is as follows. Catalyzes the pyruvoyl-dependent decarboxylation of aspartate to produce beta-alanine. This is Aspartate 1-decarboxylase from Leptospira interrogans serogroup Icterohaemorrhagiae serovar Lai (strain 56601).